Reading from the N-terminus, the 123-residue chain is Protein Rev (123 aa).

Ser5 carries the post-translational modification Phosphoserine; by host CK2. Positions 18–26 are homomultimerization; that stretch reads IIKLLYQSS. A disordered region spans residues 25 to 50; it reads SSPCPNPRGSRQARKNRRRRWRARQR. A Nuclear localization signal and RNA-binding (RRE) motif is present at residues 34-50; the sequence is SRQARKNRRRRWRARQR. Residues 35-49 are compositionally biased toward basic residues; it reads RQARKNRRRRWRARQ. Residues 73–84 carry the Nuclear export signal and binding to XPO1 motif; the sequence is LQLPPIERLRLD. The tract at residues 86-123 is disordered; the sequence is SESCGTSGTQQPQGTETGVGGPQISVESSAVLGSGTKN. Positions 88–101 are enriched in polar residues; it reads SCGTSGTQQPQGTE. Phosphoserine; by host is present on Ser92.

This sequence belongs to the HIV-1 REV protein family. In terms of assembly, homomultimer; when bound to the RRE. Multimeric assembly is essential for activity and may involve XPO1. Binds to human KPNB1, XPO1, TNPO1, RANBP5 and IPO7. Interacts with the viral Integrase. Interacts with human KHDRBS1. Interacts with human NAP1; this interaction decreases Rev multimerization and stimulates its activity. Interacts with human DEAD-box helicases DDX3 and DDX24; these interactions may serve for viral RNA export to the cytoplasm and packaging, respectively. Interacts with human PSIP1; this interaction may inhibit HIV-1 DNA integration by promoting dissociation of the Integrase-LEDGF/p75 complex. In terms of processing, asymmetrically arginine dimethylated at one site by host PRMT6. Methylation impairs the RNA-binding activity and export of viral RNA from the nucleus to the cytoplasm. Phosphorylated by protein kinase CK2. Presence of, and maybe binding to the N-terminus of the regulatory beta subunit of CK2 is necessary for CK2-mediated Rev's phosphorylation.

It localises to the host nucleus. The protein localises to the host nucleolus. It is found in the host cytoplasm. In terms of biological role, escorts unspliced or incompletely spliced viral pre-mRNAs (late transcripts) out of the nucleus of infected cells. These pre-mRNAs carry a recognition sequence called Rev responsive element (RRE) located in the env gene, that is not present in fully spliced viral mRNAs (early transcripts). This function is essential since most viral proteins are translated from unspliced or partially spliced pre-mRNAs which cannot exit the nucleus by the pathway used by fully processed cellular mRNAs. Rev itself is translated from a fully spliced mRNA that readily exits the nucleus. Rev's nuclear localization signal (NLS) binds directly to KPNB1/Importin beta-1 without previous binding to KPNA1/Importin alpha-1. KPNB1 binds to the GDP bound form of RAN (Ran-GDP) and targets Rev to the nucleus. In the nucleus, the conversion from Ran-GDP to Ran-GTP dissociates Rev from KPNB1 and allows Rev's binding to the RRE in viral pre-mRNAs. Rev multimerization on the RRE via cooperative assembly exposes its nuclear export signal (NES) to the surface. Rev can then form a complex with XPO1/CRM1 and Ran-GTP, leading to nuclear export of the complex. Conversion from Ran-GTP to Ran-GDP mediates dissociation of the Rev/RRE/XPO1/RAN complex, so that Rev can return to the nucleus for a subsequent round of export. Beside KPNB1, also seems to interact with TNPO1/Transportin-1, RANBP5/IPO5 and IPO7/RANBP7 for nuclear import. The nucleoporin-like HRB/RIP is an essential cofactor that probably indirectly interacts with Rev to release HIV RNAs from the perinuclear region to the cytoplasm. This Human immunodeficiency virus type 1 group M subtype A (isolate U455) (HIV-1) protein is Protein Rev.